A 288-amino-acid polypeptide reads, in one-letter code: 33 kDa chaperonin (288 aa).

2 disulfide bridges follow: cysteine 236–cysteine 238 and cysteine 269–cysteine 272.

This sequence belongs to the HSP33 family. Post-translationally, under oxidizing conditions two disulfide bonds are formed involving the reactive cysteines. Under reducing conditions zinc is bound to the reactive cysteines and the protein is inactive.

Its subcellular location is the cytoplasm. Functionally, redox regulated molecular chaperone. Protects both thermally unfolding and oxidatively damaged proteins from irreversible aggregation. Plays an important role in the bacterial defense system toward oxidative stress. This chain is 33 kDa chaperonin, found in Lactococcus lactis subsp. cremoris (strain MG1363).